The chain runs to 103 residues: Urease subunit beta (103 aa).

Belongs to the urease beta subunit family. Heterotrimer of UreA (gamma), UreB (beta) and UreC (alpha) subunits. Three heterotrimers associate to form the active enzyme.

Its subcellular location is the cytoplasm. It catalyses the reaction urea + 2 H2O + H(+) = hydrogencarbonate + 2 NH4(+). It functions in the pathway nitrogen metabolism; urea degradation; CO(2) and NH(3) from urea (urease route): step 1/1. This is Urease subunit beta from Blochmanniella floridana.